Consider the following 327-residue polypeptide: Methionyl-tRNA formyltransferase (327 aa).

Position 121-124 (121-124 (SLLP)) interacts with (6S)-5,6,7,8-tetrahydrofolate.

It belongs to the Fmt family.

The enzyme catalyses L-methionyl-tRNA(fMet) + (6R)-10-formyltetrahydrofolate = N-formyl-L-methionyl-tRNA(fMet) + (6S)-5,6,7,8-tetrahydrofolate + H(+). Attaches a formyl group to the free amino group of methionyl-tRNA(fMet). The formyl group appears to play a dual role in the initiator identity of N-formylmethionyl-tRNA by promoting its recognition by IF2 and preventing the misappropriation of this tRNA by the elongation apparatus. This is Methionyl-tRNA formyltransferase from Burkholderia multivorans (strain ATCC 17616 / 249).